A 26-amino-acid chain; its full sequence is Acyl carrier protein (26 aa).

The region spanning 2-26 (SDTATRVQKIVVEHLGVESDKVTQE) is the Carrier domain.

The protein belongs to the acyl carrier protein (ACP) family. 4'-phosphopantetheine is transferred from CoA to a specific serine of apo-ACP by AcpS. This modification is essential for activity because fatty acids are bound in thioester linkage to the sulfhydryl of the prosthetic group.

Its subcellular location is the cytoplasm. It participates in lipid metabolism; fatty acid biosynthesis. Carrier of the growing fatty acid chain in fatty acid biosynthesis. This chain is Acyl carrier protein (acpP), found in Erythrobacter longus.